The primary structure comprises 442 residues: Circumsporozoite protein (442 aa).

The signal sequence occupies residues 1 to 18 (MMRKLAILSVSSFLFVEA). The disordered stretch occupies residues 69 to 357 (SRSLGENDDG…VKNNNNEEPS (289 aa)). A compositionally biased stretch (low complexity) spans 81–94 (DNGNNNNGNNNNGD). Residues 95-115 (NGREGKDEDKRDGNNEDNEKL) are compositionally biased toward basic and acidic residues. Positions 114 to 121 (KLRKPKHK) are required for the binding to heparan sulfate proteoglycans (HSPGs) on the surface of host hepatocytes. The segment at 122–126 (KLKQP) is region I; contains the proteolytic cleavage site. The segment covering 130–318 (NPDPNANPNV…PNANPNANPN (189 aa)) has biased composition (low complexity). 46 repeat units span residues 134–137 (NANP), 138–141 (NVDP), 142–145 (NANP), 146–149 (NVDP), 150–153 (NANP), 154–157 (NANP), 158–161 (NANP), 162–165 (NANP), 166–169 (NANP), 170–173 (NANP), 174–177 (NANP), 178–181 (NANP), 182–185 (NANP), 186–189 (NANP), 190–193 (NANP), 194–197 (NANP), 198–201 (NANP), 202–205 (NANP), 206–209 (NANP), 210–213 (NVDP), 214–217 (NANP), 218–221 (NANP), 222–225 (NANP), 226–229 (NANP), 230–233 (NANP), 234–237 (NANP), 238–241 (NANP), 242–245 (NANP), 246–249 (NANP), 250–253 (NANP), 254–257 (NANP), 258–261 (NANP), 262–265 (NANP), 266–269 (NANP), 270–273 (NANP), 274–277 (NANP), 278–281 (NANP), 282–285 (NANP), 286–289 (NANP), 290–293 (NANP), 294–297 (NANP), 298–301 (NANP), 302–305 (NANP), 306–309 (NANP), 310–313 (NANP), and 314–317 (NANP). Positions 134-317 (NANPNVDPNA…NPNANPNANP (184 aa)) are 46 X 4 AA tandem repeats of N-[AV]-[ND]-P. Residues 319-334 (KNNQGNGQGHNMPNDP) show a composition bias toward polar residues. Over residues 340 to 354 (ENANANNAVKNNNNE) the composition is skewed to low complexity. The TSP type-1 domain maps to 367–420 (KIQNSLSTEWSPCSVTCGNGIQVRIKPGSADKPKDQLDYENDIEKKICKMEKCS). Intrachain disulfides connect Cys379-Cys414 and Cys383-Cys419. The O-linked (Fuc) threonine glycan is linked to Thr382. Cys419 carries GPI-anchor amidated cysteine lipidation. The propeptide at 420–442 (SSVFNVVNSSIGLIMVLSFLFLN) is removed in mature form.

The protein belongs to the plasmodium circumsporozoite protein family. In terms of processing, during host cell invasion, proteolytically cleaved at the cell membrane in the region I by a papain-like cysteine protease of parasite origin. Cleavage is triggered by the sporozoite contact with highly sulfated heparan sulfate proteoglycans (HSPGs) present on the host hepatocyte cell surface. Cleavage exposes the TSP type-1 (TSR) domain and is required for productive invasion of host hepatocytes but not for adhesion to the host cell membrane. Cleavage is dispensable for sporozoite development in the oocyst, motility and for traversal of host and vector cells. Post-translationally, O-glycosylated; maybe by POFUT2.

The protein resides in the cell membrane. It is found in the cytoplasm. Essential sporozoite protein. In the mosquito vector, required for sporozoite development in the oocyst, migration through the vector hemolymph and entry into the vector salivary glands. In the vertebrate host, required for sporozoite migration through the host dermis and infection of host hepatocytes. Binds to highly sulfated heparan sulfate proteoglycans (HSPGs) on the surface of host hepatocytes. Functionally, in the vertebrate host, binds to highly sulfated heparan sulfate proteoglycans (HSPGs) on the surface of host hepatocytes and is required for sporozoite invasion of the host hepatocytes. The protein is Circumsporozoite protein of Plasmodium falciparum (isolate Wellcome).